A 368-amino-acid polypeptide reads, in one-letter code: Glutamate 5-kinase (368 aa).

Residue lysine 12 participates in ATP binding. Serine 52, aspartate 139, and asparagine 151 together coordinate substrate. Residues serine 171–aspartate 172 and threonine 213–lysine 219 each bind ATP. The region spanning lysine 277–isoleucine 354 is the PUA domain.

It belongs to the glutamate 5-kinase family.

The protein localises to the cytoplasm. The enzyme catalyses L-glutamate + ATP = L-glutamyl 5-phosphate + ADP. It functions in the pathway amino-acid biosynthesis; L-proline biosynthesis; L-glutamate 5-semialdehyde from L-glutamate: step 1/2. Its function is as follows. Catalyzes the transfer of a phosphate group to glutamate to form L-glutamate 5-phosphate. The chain is Glutamate 5-kinase from Pelagibacter ubique (strain HTCC1062).